Reading from the N-terminus, the 91-residue chain is Acylphosphatase (91 aa).

An Acylphosphatase-like domain is found at 5–91 (WKKWNVRGVV…QEYKDFHVEF (87 aa)). Catalysis depends on residues Arg-20 and Asn-38.

Belongs to the acylphosphatase family.

The catalysed reaction is an acyl phosphate + H2O = a carboxylate + phosphate + H(+). The protein is Acylphosphatase (acyP) of Fervidobacterium nodosum (strain ATCC 35602 / DSM 5306 / Rt17-B1).